The following is a 177-amino-acid chain: B-phycoerythrin beta chain (177 aa).

Residues C50 and C61 each coordinate phycourobilin. N72 bears the N4-methylasparagine mark. The (2R,3E)-phycoerythrobilin site is built by C82 and C158.

This sequence belongs to the phycobiliprotein family. Heteromer of 6 alpha, 6 beta and one gamma chain. In terms of processing, contains two covalently linked phycoerythrobilin chromophores and one covalently linked phycourobilin chromophore.

It localises to the plastid. The protein resides in the chloroplast thylakoid membrane. Light-harvesting photosynthetic bile pigment-protein from the phycobiliprotein complex. The polypeptide is B-phycoerythrin beta chain (cpeB) (Rhodella violacea (Red alga)).